The primary structure comprises 510 residues: NADH-quinone oxidoreductase subunit N (510 aa).

14 consecutive transmembrane segments (helical) span residues 14–34 (LLPEFIILGFATFLSLLDLFA), 42–62 (VIGWLSFLGTVIAAIFVIINM), 84–104 (AFKLIFLAGTAFAILISLSYL), 113–133 (GEYYYLLLTGLLGAMVMASSA), 135–155 (LITLFVGLELLSLSSYVLVGL), 170–190 (VVSGSIATAVLLFGMSYVYGL), 208–228 (MAGYQFLVYTAFAFLAVGLAF), 247–267 (PTPVTVFLAVVSKAAGFALIF), 286–306 (FFFEEGSLYLGLMAAASMIIG), 323–343 (SGIAQAGYLLVPFVPPTSLFF), 346–366 (VIFYLFGYLLVSFGAFAVIMV), 390–410 (AIAMSIFLLSLAGIPITVGFF), 426–446 (WLAAIMIITSVISYYYYFGII), and 466–486 (IWTFILIMAIATVFFGAFPGL).

This sequence belongs to the complex I subunit 2 family. NDH-1 is composed of 14 different subunits. Subunits NuoA, H, J, K, L, M, N constitute the membrane sector of the complex.

It localises to the cell membrane. It carries out the reaction a quinone + NADH + 5 H(+)(in) = a quinol + NAD(+) + 4 H(+)(out). NDH-1 shuttles electrons from NADH, via FMN and iron-sulfur (Fe-S) centers, to quinones in the respiratory chain. The immediate electron acceptor for the enzyme in this species is believed to be a menaquinone. Couples the redox reaction to proton translocation (for every two electrons transferred, four hydrogen ions are translocated across the cytoplasmic membrane), and thus conserves the redox energy in a proton gradient. This is NADH-quinone oxidoreductase subunit N from Brevibacillus brevis (strain 47 / JCM 6285 / NBRC 100599).